Here is a 551-residue protein sequence, read N- to C-terminus: Meiotically up-regulated gene 184 protein (551 aa).

In terms of domain architecture, J spans 12–78; that stretch reads DYYAILKLQK…TKRLIYDQLF (67 aa). Positions 85–122 are enriched in polar residues; it reads RSQYKPNSTSNPSKHTSAYASYNKGKNSKWSSPFASTT. 3 disordered regions span residues 85 to 153, 176 to 226, and 334 to 359; these read RSQY…FPRD, RQEP…SVYK, and EAES…TRNN. A compositionally biased stretch (basic and acidic residues) spans 124–133; that stretch reads KPQESSEKYS. The segment covering 134 to 146 has biased composition (basic residues); it reads KKSSTRKKEHFNK. Composition is skewed to basic and acidic residues over residues 176–187 and 203–219; these read RQEPESLKKENN and GPKD…KIPE.

Its subcellular location is the cytoplasm. It is found in the cytoskeleton. Has a role in sporulation. This chain is Meiotically up-regulated gene 184 protein (mug184), found in Schizosaccharomyces pombe (strain 972 / ATCC 24843) (Fission yeast).